A 287-amino-acid polypeptide reads, in one-letter code: Protease HtpX (287 aa).

A run of 2 helical transmembrane segments spans residues 4–24 (VLLF…VFNI) and 37–57 (VGLL…SLWI). His-143 contributes to the Zn(2+) binding site. Glu-144 is a catalytic residue. Zn(2+) is bound at residue His-147. The next 2 membrane-spanning stretches (helical) occupy residues 158–178 (LIQG…ASAI) and 194–214 (GVVM…VMWF). Residue Glu-219 coordinates Zn(2+).

Belongs to the peptidase M48B family. Zn(2+) is required as a cofactor.

The protein localises to the cell inner membrane. The sequence is that of Protease HtpX from Idiomarina loihiensis (strain ATCC BAA-735 / DSM 15497 / L2-TR).